The chain runs to 510 residues: DNA nucleotidylexotransferase (510 aa).

Positions proline 11 to lysine 17 match the Nuclear localization signal motif. Residues lysine 27–arginine 124 enclose the BRCT domain. Residues valine 254–threonine 258 are involved in DNA binding. A 2'-deoxyribonucleoside 5'-triphosphate is bound by residues glycine 329–asparagine 334 and histidine 338–aspartate 341. Positions 339, 341, and 434 each coordinate Mg(2+). Residue glycine 449 to tryptophan 450 coordinates a 2'-deoxyribonucleoside 5'-triphosphate.

Belongs to the DNA polymerase type-X family. It depends on Mg(2+) as a cofactor.

The protein localises to the nucleus. It catalyses the reaction DNA(n) + a 2'-deoxyribonucleoside 5'-triphosphate = DNA(n+1) + diphosphate. Functionally, template-independent DNA polymerase which catalyzes the random addition of deoxynucleoside 5'-triphosphate to the 3'-end of a DNA initiator. One of the in vivo functions of this enzyme is the addition of nucleotides at the junction (N region) of rearranged Ig heavy chain and T-cell receptor gene segments during the maturation of B- and T-cells. This Ambystoma mexicanum (Axolotl) protein is DNA nucleotidylexotransferase (DNTT).